Here is a 123-residue protein sequence, read N- to C-terminus: Large ribosomal subunit protein bL12 (123 aa).

It belongs to the bacterial ribosomal protein bL12 family. In terms of assembly, homodimer. Part of the ribosomal stalk of the 50S ribosomal subunit. Forms a multimeric L10(L12)X complex, where L10 forms an elongated spine to which 2 to 4 L12 dimers bind in a sequential fashion. Binds GTP-bound translation factors.

Its function is as follows. Forms part of the ribosomal stalk which helps the ribosome interact with GTP-bound translation factors. Is thus essential for accurate translation. The chain is Large ribosomal subunit protein bL12 from Rhodopseudomonas palustris (strain BisB5).